Reading from the N-terminus, the 935-residue chain is Isoleucine--tRNA ligase (935 aa).

The short motif at 58–68 (PYANGSIHVGH) is the 'HIGH' region element. L-isoleucyl-5'-AMP is bound at residue Glu-558. Residues 599-603 (KMSKS) carry the 'KMSKS' region motif. Lys-602 contacts ATP. Residues Cys-897, Cys-900, Cys-917, and Cys-920 each contribute to the Zn(2+) site.

It belongs to the class-I aminoacyl-tRNA synthetase family. IleS type 1 subfamily. In terms of assembly, monomer. Zn(2+) is required as a cofactor.

Its subcellular location is the cytoplasm. The catalysed reaction is tRNA(Ile) + L-isoleucine + ATP = L-isoleucyl-tRNA(Ile) + AMP + diphosphate. Its function is as follows. Catalyzes the attachment of isoleucine to tRNA(Ile). As IleRS can inadvertently accommodate and process structurally similar amino acids such as valine, to avoid such errors it has two additional distinct tRNA(Ile)-dependent editing activities. One activity is designated as 'pretransfer' editing and involves the hydrolysis of activated Val-AMP. The other activity is designated 'posttransfer' editing and involves deacylation of mischarged Val-tRNA(Ile). This chain is Isoleucine--tRNA ligase, found in Francisella tularensis subsp. novicida (strain U112).